The following is a 459-amino-acid chain: Ribulose bisphosphate carboxylase large chain (459 aa).

Residue lysine 4 is modified to N6,N6,N6-trimethyllysine. Residues asparagine 113 and threonine 163 each contribute to the substrate site. Lysine 165 (proton acceptor) is an active-site residue. Lysine 167 lines the substrate pocket. The Mg(2+) site is built by lysine 191, aspartate 193, and glutamate 194. Residue lysine 191 is modified to N6-carboxylysine. The active-site Proton acceptor is the histidine 284. Residues arginine 285, histidine 317, and serine 369 each coordinate substrate.

This sequence belongs to the RuBisCO large chain family. Type I subfamily. As to quaternary structure, heterohexadecamer of 8 large chains and 8 small chains; disulfide-linked. The disulfide link is formed within the large subunit homodimers. Mg(2+) is required as a cofactor. Post-translationally, the disulfide bond which can form in the large chain dimeric partners within the hexadecamer appears to be associated with oxidative stress and protein turnover.

The protein localises to the plastid. Its subcellular location is the chloroplast. It carries out the reaction 2 (2R)-3-phosphoglycerate + 2 H(+) = D-ribulose 1,5-bisphosphate + CO2 + H2O. The catalysed reaction is D-ribulose 1,5-bisphosphate + O2 = 2-phosphoglycolate + (2R)-3-phosphoglycerate + 2 H(+). Its function is as follows. RuBisCO catalyzes two reactions: the carboxylation of D-ribulose 1,5-bisphosphate, the primary event in carbon dioxide fixation, as well as the oxidative fragmentation of the pentose substrate in the photorespiration process. Both reactions occur simultaneously and in competition at the same active site. The sequence is that of Ribulose bisphosphate carboxylase large chain from Garrya elliptica (Wavyleaf silktassel).